A 331-amino-acid chain; its full sequence is Probable endo-beta-1,4-glucanase B (331 aa).

The signal sequence occupies residues 1-18 (MKFQSTLLLAAAAGSALA). N-linked (GlcNAc...) asparagine glycosylation is found at Asn38 and Asn100. Glu160 serves as the catalytic Proton donor. A glycan (N-linked (GlcNAc...) asparagine) is linked at Asn211. Glu266 (nucleophile) is an active-site residue. Asn288 carries N-linked (GlcNAc...) asparagine glycosylation.

The protein belongs to the glycosyl hydrolase 5 (cellulase A) family.

The protein resides in the secreted. It carries out the reaction Endohydrolysis of (1-&gt;4)-beta-D-glucosidic linkages in cellulose, lichenin and cereal beta-D-glucans.. Has endoglucanase activity on substrates containing beta-1,4 glycosidic bonds, like in carboxymethylcellulose (CMC), hydroxyethylcellulose (HEC) and beta-glucan. Involved in the degradation of complex natural cellulosic substrates. This chain is Probable endo-beta-1,4-glucanase B (eglB), found in Aspergillus niger (strain ATCC MYA-4892 / CBS 513.88 / FGSC A1513).